Here is a 732-residue protein sequence, read N- to C-terminus: Catalase-peroxidase (732 aa).

The segment at residues 97–220 is a cross-link (tryptophyl-tyrosyl-methioninium (Trp-Tyr) (with M-246)); that stretch reads WHSAGTYRTS…LAAVQMGLIY (124 aa). Catalysis depends on His98, which acts as the Proton acceptor. The tryptophyl-tyrosyl-methioninium (Tyr-Met) (with W-97) cross-link spans 220 to 246; that stretch reads YVNPEGPDGNPDPVAAGRDIRETFARM. Residue His261 coordinates heme b.

The protein belongs to the peroxidase family. Peroxidase/catalase subfamily. In terms of assembly, homodimer or homotetramer. Heme b serves as cofactor. Post-translationally, formation of the three residue Trp-Tyr-Met cross-link is important for the catalase, but not the peroxidase activity of the enzyme.

The enzyme catalyses H2O2 + AH2 = A + 2 H2O. The catalysed reaction is 2 H2O2 = O2 + 2 H2O. Its function is as follows. Bifunctional enzyme with both catalase and broad-spectrum peroxidase activity. In Chlorobium phaeobacteroides (strain DSM 266 / SMG 266 / 2430), this protein is Catalase-peroxidase.